The sequence spans 193 residues: Phosphoheptose isomerase (193 aa).

Positions 37–193 (IAQSFKNEKK…LIIEKEMQKN (157 aa)) constitute an SIS domain. 52–54 (NGG) lines the substrate pocket. Zn(2+) is bound by residues His61 and Glu65. Substrate-binding positions include Glu65, 93-94 (ND), 119-121 (STS), Ser124, and Gln172. Gln172 and His180 together coordinate Zn(2+).

Belongs to the SIS family. GmhA subfamily. In terms of assembly, homotetramer. Zn(2+) is required as a cofactor.

It is found in the cytoplasm. It carries out the reaction 2 D-sedoheptulose 7-phosphate = D-glycero-alpha-D-manno-heptose 7-phosphate + D-glycero-beta-D-manno-heptose 7-phosphate. Its pathway is carbohydrate biosynthesis; D-glycero-D-manno-heptose 7-phosphate biosynthesis; D-glycero-alpha-D-manno-heptose 7-phosphate and D-glycero-beta-D-manno-heptose 7-phosphate from sedoheptulose 7-phosphate: step 1/1. In terms of biological role, catalyzes the isomerization of sedoheptulose 7-phosphate in D-glycero-D-manno-heptose 7-phosphate. This chain is Phosphoheptose isomerase, found in Buchnera aphidicola subsp. Acyrthosiphon pisum (strain 5A).